The following is a 329-amino-acid chain: Flotillin-like protein FloA (329 aa).

Helical transmembrane passes span 4 to 24 (IGFI…FSFV) and 26 to 46 (VGLW…TLVG).

It belongs to the flotillin-like FloA family. Homooligomerizes.

The protein resides in the cell membrane. It localises to the membrane raft. Found in functional membrane microdomains (FMM) that may be equivalent to eukaryotic membrane rafts. FMMs are highly dynamic and increase in number as cells age. Flotillins are thought to be important factors in membrane fluidity. The sequence is that of Flotillin-like protein FloA from Staphylococcus epidermidis (strain ATCC 35984 / DSM 28319 / BCRC 17069 / CCUG 31568 / BM 3577 / RP62A).